The chain runs to 368 residues: GDP-fucose transporter 1 (368 aa).

The next 9 membrane-spanning stretches (helical) occupy residues 64-84, 98-118, 141-161, 166-186, 195-215, 217-237, 251-271, 287-307, and 332-352; these read LSTIASVIAFYFFISISLVFL, LFITWYQQIISFVSIYIMTSI, VLPVTAVLTGMVIFNNLCLEY, FYQVARSLTICFSLILTYIVL, TMACLVVFLGFVLGSAGEVNF, WLGIIFGLLSSFFVALYSIAV, LSIYNTAISIGLIFPLILVSG, FWFYMTVAGLMGYLISISVFM, and AVVFWGNPISTQNAVGILLVI.

Belongs to the TPT transporter family. SLC35C subfamily.

Its subcellular location is the golgi apparatus membrane. The catalysed reaction is GMP(out) + GDP-beta-L-fucose(in) = GMP(in) + GDP-beta-L-fucose(out). In terms of biological role, antiporter specific for GDP-l-fucose and depending on the concomitant reverse transport of GMP. Involved in GDP-fucose import from the cytoplasm into the Golgi lumen. This is GDP-fucose transporter 1 (slc35c1) from Dictyostelium discoideum (Social amoeba).